A 369-amino-acid polypeptide reads, in one-letter code: Uroporphyrinogen decarboxylase (369 aa).

Residues 36 to 40 (RQAGR), Asp86, Tyr162, Ser217, and His342 each bind substrate.

This sequence belongs to the uroporphyrinogen decarboxylase family. As to quaternary structure, homodimer.

The protein resides in the cytoplasm. The enzyme catalyses uroporphyrinogen III + 4 H(+) = coproporphyrinogen III + 4 CO2. The protein operates within porphyrin-containing compound metabolism; protoporphyrin-IX biosynthesis; coproporphyrinogen-III from 5-aminolevulinate: step 4/4. In terms of biological role, catalyzes the decarboxylation of four acetate groups of uroporphyrinogen-III to yield coproporphyrinogen-III. This Albidiferax ferrireducens (strain ATCC BAA-621 / DSM 15236 / T118) (Rhodoferax ferrireducens) protein is Uroporphyrinogen decarboxylase.